The following is a 141-amino-acid chain: MLVPQDYRIPFGIGYLLGTFFLSPDLDLHFSKPSQRWKFLKFLWFPFWVFSRHRGITHVPFLGTLVKLFYLIFIFFFLYFAVLGVLSILGFAPKELLSFDPFAFINEFLKSEKGFFFILGLIVADLLHIVLDIVSSFIKRF.

4 helical membrane passes run 7 to 24 (YRIPFGIGYLLGTFFLSP), 39 to 56 (FLKFLWFPFWVFSRHRGI), 69 to 91 (FYLIFIFFFLYFAVLGVLSILGF), and 116 to 138 (FFILGLIVADLLHIVLDIVSSFI).

It localises to the cell membrane. This is an uncharacterized protein from Aquifex aeolicus (strain VF5).